The chain runs to 216 residues: Cytidylate kinase (216 aa).

Residue 10-18 (GPAGAGKST) coordinates ATP.

The protein belongs to the cytidylate kinase family. Type 1 subfamily.

It localises to the cytoplasm. The enzyme catalyses CMP + ATP = CDP + ADP. It catalyses the reaction dCMP + ATP = dCDP + ADP. The sequence is that of Cytidylate kinase from Clostridioides difficile (strain 630) (Peptoclostridium difficile).